A 91-amino-acid chain; its full sequence is Small ribosomal subunit protein bS18 (91 aa).

Belongs to the bacterial ribosomal protein bS18 family. Part of the 30S ribosomal subunit. Forms a tight heterodimer with protein bS6.

Its function is as follows. Binds as a heterodimer with protein bS6 to the central domain of the 16S rRNA, where it helps stabilize the platform of the 30S subunit. The chain is Small ribosomal subunit protein bS18 from Syntrophotalea carbinolica (strain DSM 2380 / NBRC 103641 / GraBd1) (Pelobacter carbinolicus).